The chain runs to 326 residues: Polycomb complex protein BMI-1 (326 aa).

An RING-type zinc finger spans residues 18 to 57 (CVLCGGYFIDATTIIECLHSFCKTCIVRYLETSKYCPICD). A Nuclear localization signal motif is present at residues 81-95 (KLVPGLFKNEMKRRR). The tract at residues 162 to 182 (RYLRCPAAMTVMHLRKFLRSK) is interaction with PHC2. Positions 164–228 (LRCPAAMTVM…GPLPLKYRVR (65 aa)) are interaction with E4F1. Positions 236 to 326 (ISHQRDGLTN…VNGSSATSSG (91 aa)) are disordered. Composition is skewed to low complexity over residues 266–278 (PSTS…PSTP), 290–303 (SSTM…PSGN), and 315–326 (SSVNGSSATSSG).

In terms of assembly, component of a PRC1-like complex. Identified in a PRC1-like HPRC-H complex with CBX2, CBX4, CBX8, PHC1, PHC2, PHC3 RING1 and RNF2. Interacts with RNF2/RING2. Interacts with RING1. Part of a complex that contains RNF2, UB2D3 and BMI1, where RNF2 and BMI1 form a tight heterodimer, and UB2D3 interacts only with RNF2. The complex composed of RNF2, UB2D3 and BMI1 binds nucleosomes, and has activity only with nucleosomal histone H2A. Interacts with CBX7 and CBX8. Interacts with SPOP. Part of a complex consisting of BMI1, CUL3 and SPOP. Interacts with E4F1. Interacts with PHC2. Interacts with zinc finger protein ZNF277. May be part of a complex including at least ZNF277, BMI1 and RNF2/RING2. In terms of processing, may be polyubiquitinated; which does not lead to proteasomal degradation. Monoubiquitinated.

It localises to the nucleus. It is found in the cytoplasm. Its function is as follows. Component of a Polycomb group (PcG) multiprotein PRC1-like complex, a complex class required to maintain the transcriptionally repressive state of many genes, including Hox genes, throughout development. PcG PRC1 complex acts via chromatin remodeling and modification of histones; it mediates monoubiquitination of histone H2A 'Lys-119', rendering chromatin heritably changed in its expressibility. The complex composed of RNF2, UB2D3 and BMI1 binds nucleosomes, and has activity only with nucleosomal histone H2A. In the PRC1-like complex, regulates the E3 ubiquitin-protein ligase activity of RNF2/RING2. The protein is Polycomb complex protein BMI-1 (BMI1) of Bos taurus (Bovine).